We begin with the raw amino-acid sequence, 81 residues long: Photosystem I iron-sulfur center (81 aa).

2 4Fe-4S ferredoxin-type domains span residues S2 to W31 and I39 to Y68. Residues C11, C14, C17, C21, C48, C51, C54, and C58 each contribute to the [4Fe-4S] cluster site.

In terms of assembly, the cyanobacterial PSI reaction center is composed of one copy each of PsaA,B,C,D,E,F,I,J,K,L,M and X, and forms trimeric complexes. [4Fe-4S] cluster serves as cofactor.

Its subcellular location is the cellular thylakoid membrane. The catalysed reaction is reduced [plastocyanin] + hnu + oxidized [2Fe-2S]-[ferredoxin] = oxidized [plastocyanin] + reduced [2Fe-2S]-[ferredoxin]. Its function is as follows. Apoprotein for the two 4Fe-4S centers FA and FB of photosystem I (PSI); essential for photochemical activity. FB is the terminal electron acceptor of PSI, donating electrons to ferredoxin. The C-terminus interacts with PsaA/B/D and helps assemble the protein into the PSI complex. Required for binding of PsaD and PsaE to PSI. PSI is a plastocyanin/cytochrome c6-ferredoxin oxidoreductase, converting photonic excitation into a charge separation, which transfers an electron from the donor P700 chlorophyll pair to the spectroscopically characterized acceptors A0, A1, FX, FA and FB in turn. This Prochlorococcus marinus (strain MIT 9312) protein is Photosystem I iron-sulfur center.